Here is a 358-residue protein sequence, read N- to C-terminus: Chorismate synthase (358 aa).

The NADP(+) site is built by arginine 46 and arginine 52. Residues 123 to 125 (RSS), 239 to 240 (NA), glycine 283, 298 to 302 (KSVAT), and arginine 324 contribute to the FMN site.

The protein belongs to the chorismate synthase family. In terms of assembly, homotetramer. Requires FMNH2 as cofactor.

The catalysed reaction is 5-O-(1-carboxyvinyl)-3-phosphoshikimate = chorismate + phosphate. It functions in the pathway metabolic intermediate biosynthesis; chorismate biosynthesis; chorismate from D-erythrose 4-phosphate and phosphoenolpyruvate: step 7/7. Functionally, catalyzes the anti-1,4-elimination of the C-3 phosphate and the C-6 proR hydrogen from 5-enolpyruvylshikimate-3-phosphate (EPSP) to yield chorismate, which is the branch point compound that serves as the starting substrate for the three terminal pathways of aromatic amino acid biosynthesis. This reaction introduces a second double bond into the aromatic ring system. This chain is Chorismate synthase, found in Parabacteroides distasonis (strain ATCC 8503 / DSM 20701 / CIP 104284 / JCM 5825 / NCTC 11152).